The primary structure comprises 740 residues: Ion-translocating oxidoreductase complex subunit C (740 aa).

2 4Fe-4S ferredoxin-type domains span residues 369–397 (GEPQ…QQLY) and 407–436 (KATT…VQYF). Residues C377, C380, C383, C387, C416, C419, C422, and C426 each contribute to the [4Fe-4S] cluster site. Disordered stretches follow at residues 602 to 621 (KLEQ…PRKA) and 660 to 718 (ARAK…RKAA). The span at 611 to 621 (KPEEQVDPRKA) shows a compositional bias: basic and acidic residues.

Belongs to the 4Fe4S bacterial-type ferredoxin family. RnfC subfamily. In terms of assembly, the complex is composed of six subunits: RsxA, RsxB, RsxC, RsxD, RsxE and RsxG. It depends on [4Fe-4S] cluster as a cofactor.

The protein resides in the cell inner membrane. Its function is as follows. Part of a membrane-bound complex that couples electron transfer with translocation of ions across the membrane. Required to maintain the reduced state of SoxR. The polypeptide is Ion-translocating oxidoreductase complex subunit C (Escherichia coli O9:H4 (strain HS)).